A 547-amino-acid chain; its full sequence is Chaperonin GroEL 2 (547 aa).

ATP-binding positions include 30–33, Lys51, 87–91, Gly415, 479–481, and Asp495; these read TLGP, DGTTT, and NAA. Residues 528–547 are disordered; that stretch reads KPATAGLPHGGPGGFGGPEF. Residues 535 to 547 show a composition bias toward gly residues; sequence PHGGPGGFGGPEF.

This sequence belongs to the chaperonin (HSP60) family. As to quaternary structure, forms a cylinder of 14 subunits composed of two heptameric rings stacked back-to-back. Interacts with the co-chaperonin GroES.

The protein localises to the cytoplasm. The enzyme catalyses ATP + H2O + a folded polypeptide = ADP + phosphate + an unfolded polypeptide.. Its function is as follows. Together with its co-chaperonin GroES, plays an essential role in assisting protein folding. The GroEL-GroES system forms a nano-cage that allows encapsulation of the non-native substrate proteins and provides a physical environment optimized to promote and accelerate protein folding. The chain is Chaperonin GroEL 2 from Azoarcus sp. (strain BH72).